Reading from the N-terminus, the 253-residue chain is Large ribosomal subunit protein uL4 (253 aa).

A disordered region spans residues 61–107 (GWGSGRGTSHVPRLVNSSRAARVPHARGGRRAHPPKPEADRSEKVNT). Over residues 82-94 (RVPHARGGRRAHP) the composition is skewed to basic residues. Over residues 95 to 107 (PKPEADRSEKVNT) the composition is skewed to basic and acidic residues.

It belongs to the universal ribosomal protein uL4 family. Part of the 50S ribosomal subunit.

In terms of biological role, one of the primary rRNA binding proteins, this protein initially binds near the 5'-end of the 23S rRNA. It is important during the early stages of 50S assembly. It makes multiple contacts with different domains of the 23S rRNA in the assembled 50S subunit and ribosome. Forms part of the polypeptide exit tunnel. The polypeptide is Large ribosomal subunit protein uL4 (Methanosarcina barkeri (strain Fusaro / DSM 804)).